Here is a 296-residue protein sequence, read N- to C-terminus: MEQFRNIGIIGRLGSSQVLDTIRRLKKFLLERHLHVILEDTIAEVLPGHGLQTSTRKLLGEVCDLVIVVGGDGSLLGAARALARHNIPVLGINRGNLGFLTDIRPDELEEKVAEVLDGHYLVENRFLLQAEVRRHNEAIGQGDALNDVVLHPGKSTRMIEFEIYIDGQFVCSQKADGLIVATPTGSTAYALSAGGPIMHPKLDAIVIVPMYPHTLSGRPIVVDGNSELKIVVSKDLQIYPQVSCDGQNHFTCAPGDTITVSKKPQKLRLIHPLDHNYYEVCRTKLGWGSRLGGRDD.

Residue aspartate 72 is the Proton acceptor of the active site. NAD(+) is bound by residues 72-73, 146-147, arginine 157, lysine 174, aspartate 176, 187-192, and glutamine 247; these read DG, ND, and TAYALS.

Belongs to the NAD kinase family. Requires a divalent metal cation as cofactor.

Its subcellular location is the cytoplasm. The enzyme catalyses NAD(+) + ATP = ADP + NADP(+) + H(+). Its function is as follows. Involved in the regulation of the intracellular balance of NAD and NADP, and is a key enzyme in the biosynthesis of NADP. Catalyzes specifically the phosphorylation on 2'-hydroxyl of the adenosine moiety of NAD to yield NADP. This Pseudomonas entomophila (strain L48) protein is NAD kinase.